Consider the following 124-residue polypeptide: Small ribosomal subunit protein uS13 (124 aa).

Positions R94 to R124 are disordered.

It belongs to the universal ribosomal protein uS13 family. Part of the 30S ribosomal subunit. Forms a loose heterodimer with protein S19. Forms two bridges to the 50S subunit in the 70S ribosome.

In terms of biological role, located at the top of the head of the 30S subunit, it contacts several helices of the 16S rRNA. In the 70S ribosome it contacts the 23S rRNA (bridge B1a) and protein L5 of the 50S subunit (bridge B1b), connecting the 2 subunits; these bridges are implicated in subunit movement. Contacts the tRNAs in the A and P-sites. This is Small ribosomal subunit protein uS13 from Mycobacterium tuberculosis (strain ATCC 25177 / H37Ra).